Consider the following 97-residue polypeptide: Large ribosomal subunit protein uL23 (97 aa).

Belongs to the universal ribosomal protein uL23 family. As to quaternary structure, part of the 50S ribosomal subunit. Contacts protein L29, and trigger factor when it is bound to the ribosome.

Functionally, one of the early assembly proteins it binds 23S rRNA. One of the proteins that surrounds the polypeptide exit tunnel on the outside of the ribosome. Forms the main docking site for trigger factor binding to the ribosome. This Brachyspira hyodysenteriae (strain ATCC 49526 / WA1) protein is Large ribosomal subunit protein uL23.